Here is an 806-residue protein sequence, read N- to C-terminus: Facilitated trehalose transporter Tret1 (806 aa).

Disordered stretches follow at residues 1 to 34 (MFGN…TTGT) and 48 to 138 (LNST…HKNQ). At 1–339 (MFGNEMDDTR…LEVYRPTTNP (339 aa)) the chain is on the cytoplasmic side. A compositionally biased stretch (low complexity) spans 25–34 (GSLSTSTTGT). The chain crosses the membrane as a helical span at residues 340–360 (IFIWTQVLAALSVSLGSMVVG). The Extracellular portion of the chain corresponds to 361 to 389 (FSSAYTSPALVSMKDRNITSFEVTDQSGS). An N-linked (GlcNAc...) asparagine glycan is attached at asparagine 377. The helical transmembrane segment at 390–410 (WVGGIMPLAGLAGGILGGPLI) threads the bilayer. The Cytoplasmic portion of the chain corresponds to 411-424 (EYLGRKNTILATAT). The helical transmembrane segment at 425–445 (PFIISWLLIACATHVAMVLVG) threads the bilayer. Residues 446–447 (RA) lie on the Extracellular side of the membrane. Residues 448–468 (LSGFSVGVASLSLPVYLGETV) traverse the membrane as a helical segment. The Cytoplasmic segment spans residues 469-473 (QPEVR). The chain crosses the membrane as a helical span at residues 474–494 (GTLGLLPTAFGNIGILLCFVA). Topologically, residues 495-501 (GKYMDWS) are extracellular. A helical membrane pass occupies residues 502-522 (GLAFLGAALPIPFLLLMFLIP). Over 523–585 (ETPRWYVSRG…DLMKKANLKP (63 aa)) the chain is Cytoplasmic. The helical transmembrane segment at 586–606 (LLISLGLMFFQQLSGINAVIF) threads the bilayer. Topologically, residues 607 to 622 (YTVQIFQDAGSTIDEN) are extracellular. A helical membrane pass occupies residues 623–643 (LCTIIVGVVNFIATFIATMLI). The Cytoplasmic portion of the chain corresponds to 644–649 (DRLGRK). A helical transmembrane segment spans residues 650-670 (MLLYISDVAMIITLMTLGGFF). At 671 to 681 (YVKNSGQDVSQ) the chain is on the extracellular side. The chain crosses the membrane as a helical span at residues 682-702 (VGWLPLAAFVIYVLGFSLGFG). Residues 703–723 (PIPWLMMGEILPGKIRGSAAS) lie on the Cytoplasmic side of the membrane. A helical transmembrane segment spans residues 724-744 (VATAFNWSCTFIVTKTFADII). At 745–750 (NAIGTH) the chain is on the extracellular side. A helical transmembrane segment spans residues 751 to 771 (GTFWMFGSICVIGLAFVIFYV). The Cytoplasmic segment spans residues 772–806 (PETQGKSLEDIERKMMGRVRRMSSVANIKPLSFNM).

Belongs to the major facilitator superfamily. Sugar transporter (TC 2.A.1.1) family. Trehalose transporter subfamily.

It localises to the cell membrane. Functionally, high-capacity facilitative transporter for trehalose. Does not transport maltose, sucrose or lactose. Mediates the bidirectional transfer of trehalose. Responsible for the transport of trehalose synthesized in the fat body and the incorporation of trehalose into other tissues that require a carbon source, thereby regulating trehalose levels in the hemolymph. This chain is Facilitated trehalose transporter Tret1, found in Aedes aegypti (Yellowfever mosquito).